The chain runs to 345 residues: Probable dual-specificity RNA methyltransferase RlmN (345 aa).

Residue Glu93 is the Proton acceptor of the active site. Positions 99 to 326 (DDERATLCIS…TTIRASRGED (228 aa)) constitute a Radical SAM core domain. Cys106 and Cys331 form a disulfide bridge. [4Fe-4S] cluster is bound by residues Cys113, Cys117, and Cys120. Residues 158 to 159 (GE), Ser190, 212 to 214 (SLH), and His288 each bind S-adenosyl-L-methionine. Cys331 functions as the S-methylcysteine intermediate in the catalytic mechanism.

This sequence belongs to the radical SAM superfamily. RlmN family. Requires [4Fe-4S] cluster as cofactor.

It localises to the cytoplasm. It catalyses the reaction adenosine(2503) in 23S rRNA + 2 reduced [2Fe-2S]-[ferredoxin] + 2 S-adenosyl-L-methionine = 2-methyladenosine(2503) in 23S rRNA + 5'-deoxyadenosine + L-methionine + 2 oxidized [2Fe-2S]-[ferredoxin] + S-adenosyl-L-homocysteine. The catalysed reaction is adenosine(37) in tRNA + 2 reduced [2Fe-2S]-[ferredoxin] + 2 S-adenosyl-L-methionine = 2-methyladenosine(37) in tRNA + 5'-deoxyadenosine + L-methionine + 2 oxidized [2Fe-2S]-[ferredoxin] + S-adenosyl-L-homocysteine. Functionally, specifically methylates position 2 of adenine 2503 in 23S rRNA and position 2 of adenine 37 in tRNAs. In Bacteroides thetaiotaomicron (strain ATCC 29148 / DSM 2079 / JCM 5827 / CCUG 10774 / NCTC 10582 / VPI-5482 / E50), this protein is Probable dual-specificity RNA methyltransferase RlmN.